The chain runs to 959 residues: Glycine dehydrogenase (decarboxylating) (959 aa).

Residue Lys-708 is modified to N6-(pyridoxal phosphate)lysine.

It belongs to the GcvP family. In terms of assembly, the glycine cleavage system is composed of four proteins: P, T, L and H. Requires pyridoxal 5'-phosphate as cofactor.

The catalysed reaction is N(6)-[(R)-lipoyl]-L-lysyl-[glycine-cleavage complex H protein] + glycine + H(+) = N(6)-[(R)-S(8)-aminomethyldihydrolipoyl]-L-lysyl-[glycine-cleavage complex H protein] + CO2. Functionally, the glycine cleavage system catalyzes the degradation of glycine. The P protein binds the alpha-amino group of glycine through its pyridoxal phosphate cofactor; CO(2) is released and the remaining methylamine moiety is then transferred to the lipoamide cofactor of the H protein. This chain is Glycine dehydrogenase (decarboxylating), found in Serratia proteamaculans (strain 568).